A 147-amino-acid polypeptide reads, in one-letter code: MTIWVDADACPKVIREVLCRAAQRTGVELVFVANQLLTVPKAPNIRALQVPKGFDVADNEIARRIQPTDLLITGDIPLASEALAKGAQALNWRGDAFSKETIAAQLTMRDFMDTLRASGVQTEGPPPLSQADRQAFARQLDIWLARR.

The protein belongs to the UPF0178 family.

The chain is UPF0178 protein CV_1768 from Chromobacterium violaceum (strain ATCC 12472 / DSM 30191 / JCM 1249 / CCUG 213 / NBRC 12614 / NCIMB 9131 / NCTC 9757 / MK).